Reading from the N-terminus, the 113-residue chain is Large ribosomal subunit protein P2B (113 aa).

A disordered region spans residues 66–113 (PSGGGAIDMGAPAAVAGGGAAPAEEAKKEEKVEEKEESDEDMGFSLFD). Residues 89 to 99 (EEAKKEEKVEE) are compositionally biased toward basic and acidic residues.

Belongs to the eukaryotic ribosomal protein P1/P2 family. As to quaternary structure, P1 and P2 exist as dimers at the large ribosomal subunit. Phosphorylated.

Its function is as follows. Plays an important role in the elongation step of protein synthesis. In Zea mays (Maize), this protein is Large ribosomal subunit protein P2B (RPP2B).